The sequence spans 107 residues: Serine-rich and transmembrane domain-containing protein 1 (107 aa).

Residues 43–63 traverse the membrane as a helical segment; sequence IYVSIFLSLLAFLLLLLIIAL.

It localises to the membrane. This Homo sapiens (Human) protein is Serine-rich and transmembrane domain-containing protein 1 (SERTM1).